Here is a 938-residue protein sequence, read N- to C-terminus: Myocardin (938 aa).

The MEF2C-binding signature appears at Ile12–Arg27. RPEL repeat units follow at residues Ser18–Lys43, Asp62–Thr87, and Asp106–Ser131. The disordered stretch occupies residues Gly37–Leu64. A compositionally biased stretch (basic and acidic residues) spans Thr46–Leu64. The tract at residues Phe153 to Ser205 is HDAC5-binding. Disordered stretches follow at residues Asp155–Met282 and Asn339–Pro381. Residues Thr210 to Gly221 are compositionally biased toward polar residues. Residues Asn248–Tyr265 are compositionally biased toward basic residues. The span at Asn345 to Pro360 shows a compositional bias: low complexity. Polar residues predominate over residues Val361 to Ser372. Residues Leu383–Gln417 enclose the SAP domain. Phosphoserine; by GSK3-beta is present on residues Ser457, Ser461, Ser465, and Ser469. Positions Glu501–Ser521 are disordered. Residues Glu522–Lys566 adopt a coiled-coil conformation. Positions Ala586 to Cys606 are disordered. The segment covering Gln588–Asp600 has biased composition (polar residues). 4 positions are modified to phosphoserine; by GSK3-beta: Ser627, Ser631, Ser635, and Ser639. Composition is skewed to polar residues over residues Gly667 to Asp694 and Ser701 to Thr713. Positions Gly667–Ser734 are disordered. The required for interaction with and ubiquitination by STUB1 stretch occupies residues Ile717 to Trp938. Phosphoserine; by MAPK1 and MAPK3 is present on residues Ser815, Ser862, and Ser869. Thr896 carries the post-translational modification Phosphothreonine; by MAPK1 and MAPK3.

In terms of assembly, homodimer. Interacts with MLLT7/FOXO4. Interacts with SRF, its association does not depend on specific DNA sequences for ternary complex formation. Interacts (via C-terminal) with EP300 (via the CREB-binding domain). Interacts with HDAC4 and HDAC5. Interacts with MEF2C. Interacts (via C-terminus) with STUB1/CHIP. Interacts with PURB. Post-translationally, ubiquitinated; by STUB1/CHIP at the C-terminus, leading to its degradation by the proteasome. Phosphorylation by GSK3B is required for STUB1/CHIP-mediated ubiquitination. Phosphorylation negatively regulates transcriptional activity. Phosphorylated; by GSK3B. In terms of tissue distribution, abundantly expressed in the heart, aorta media and bladder, weakly expressed in the stomach, intestine and lung.

The protein resides in the nucleus. Functionally, smooth muscle cells (SM) and cardiac muscle cells-specific transcriptional factor which uses the canonical single or multiple CArG boxes DNA sequence. Acts as a cofactor of serum response factor (SRF) with the potential to modulate SRF-target genes. Plays a crucial role in cardiogenesis, urinary bladder development, and differentiation of the smooth muscle cell lineage (myogenesis). Positively regulates the transcription of genes involved in vascular smooth muscle contraction. This Rattus norvegicus (Rat) protein is Myocardin (Myocd).